We begin with the raw amino-acid sequence, 150 residues long: Deoxyuridine 5'-triphosphate nucleotidohydrolase (150 aa).

Substrate contacts are provided by residues 69–71, asparagine 82, and 86–88; these read RSG and LID.

It belongs to the dUTPase family. Mg(2+) serves as cofactor.

It catalyses the reaction dUTP + H2O = dUMP + diphosphate + H(+). It functions in the pathway pyrimidine metabolism; dUMP biosynthesis; dUMP from dCTP (dUTP route): step 2/2. Functionally, this enzyme is involved in nucleotide metabolism: it produces dUMP, the immediate precursor of thymidine nucleotides and it decreases the intracellular concentration of dUTP so that uracil cannot be incorporated into DNA. This chain is Deoxyuridine 5'-triphosphate nucleotidohydrolase, found in Methylobacillus flagellatus (strain ATCC 51484 / DSM 6875 / VKM B-1610 / KT).